Here is a 153-residue protein sequence, read N- to C-terminus: 3-hydroxyacyl-[acyl-carrier-protein] dehydratase FabZ (153 aa).

His-47 is a catalytic residue.

It belongs to the thioester dehydratase family. FabZ subfamily.

It is found in the cytoplasm. The catalysed reaction is a (3R)-hydroxyacyl-[ACP] = a (2E)-enoyl-[ACP] + H2O. Functionally, involved in unsaturated fatty acids biosynthesis. Catalyzes the dehydration of short chain beta-hydroxyacyl-ACPs and long chain saturated and unsaturated beta-hydroxyacyl-ACPs. The polypeptide is 3-hydroxyacyl-[acyl-carrier-protein] dehydratase FabZ (Myxococcus xanthus (strain DK1622)).